Reading from the N-terminus, the 362-residue chain is Ribosome-binding ATPase YchF (362 aa).

The region spanning 3 to 255 (FKCGIIGLPN…MSDEEKKSFM (253 aa)) is the OBG-type G domain. Residue 12-17 (NVGKST) participates in ATP binding. Mg(2+) is bound by residues serine 16 and threonine 36. A TGS domain is found at 277–360 (NLITFFTVGD…QDGDIIHFLF (84 aa)).

Belongs to the TRAFAC class OBG-HflX-like GTPase superfamily. OBG GTPase family. YchF/OLA1 subfamily. It depends on Mg(2+) as a cofactor.

Functionally, ATPase that binds to both the 70S ribosome and the 50S ribosomal subunit in a nucleotide-independent manner. In Buchnera aphidicola subsp. Acyrthosiphon pisum (strain APS) (Acyrthosiphon pisum symbiotic bacterium), this protein is Ribosome-binding ATPase YchF.